The sequence spans 516 residues: GMP synthase [glutamine-hydrolyzing] (516 aa).

Residues 8–198 form the Glutamine amidotransferase type-1 domain; that stretch reads KILILDFGSQ…VVNICGCDTL (191 aa). Cys84 acts as the Nucleophile in catalysis. Catalysis depends on residues His172 and Glu174. One can recognise a GMPS ATP-PPase domain in the interval 199–391; that stretch reads WNIENIIEND…LGLPYNMLYR (193 aa). Residue 226–232 participates in ATP binding; that stretch reads SGGVDSS.

In terms of assembly, homodimer.

The enzyme catalyses XMP + L-glutamine + ATP + H2O = GMP + L-glutamate + AMP + diphosphate + 2 H(+). It participates in purine metabolism; GMP biosynthesis; GMP from XMP (L-Gln route): step 1/1. Catalyzes the synthesis of GMP from XMP. The chain is GMP synthase [glutamine-hydrolyzing] from Francisella tularensis subsp. tularensis (strain FSC 198).